The primary structure comprises 244 residues: 3-deoxy-manno-octulosonate cytidylyltransferase (244 aa).

This sequence belongs to the KdsB family.

The protein resides in the cytoplasm. It carries out the reaction 3-deoxy-alpha-D-manno-oct-2-ulosonate + CTP = CMP-3-deoxy-beta-D-manno-octulosonate + diphosphate. It participates in nucleotide-sugar biosynthesis; CMP-3-deoxy-D-manno-octulosonate biosynthesis; CMP-3-deoxy-D-manno-octulosonate from 3-deoxy-D-manno-octulosonate and CTP: step 1/1. It functions in the pathway bacterial outer membrane biogenesis; lipopolysaccharide biosynthesis. In terms of biological role, activates KDO (a required 8-carbon sugar) for incorporation into bacterial lipopolysaccharide in Gram-negative bacteria. This chain is 3-deoxy-manno-octulosonate cytidylyltransferase, found in Ruthia magnifica subsp. Calyptogena magnifica.